The sequence spans 353 residues: Glutamate 5-kinase (353 aa).

An ATP-binding site is contributed by K8. Residues S47, D134, and N146 each coordinate substrate. Residue 198-204 (TGGIRSK) participates in ATP binding. Positions 262 to 339 (AGKIYVNKGA…SDLKKILGYE (78 aa)) constitute a PUA domain.

This sequence belongs to the glutamate 5-kinase family.

It localises to the cytoplasm. The catalysed reaction is L-glutamate + ATP = L-glutamyl 5-phosphate + ADP. The protein operates within amino-acid biosynthesis; L-proline biosynthesis; L-glutamate 5-semialdehyde from L-glutamate: step 1/2. Functionally, catalyzes the transfer of a phosphate group to glutamate to form L-glutamate 5-phosphate. In Thermotoga maritima (strain ATCC 43589 / DSM 3109 / JCM 10099 / NBRC 100826 / MSB8), this protein is Glutamate 5-kinase.